Reading from the N-terminus, the 513-residue chain is Maturase K (513 aa).

It belongs to the intron maturase 2 family. MatK subfamily.

The protein localises to the plastid. Its subcellular location is the chloroplast. Usually encoded in the trnK tRNA gene intron. Probably assists in splicing its own and other chloroplast group II introns. The polypeptide is Maturase K (Cynodon dactylon (Bermuda grass)).